A 140-amino-acid polypeptide reads, in one-letter code: ATP synthase epsilon chain (140 aa).

It belongs to the ATPase epsilon chain family. In terms of assembly, F-type ATPases have 2 components, CF(1) - the catalytic core - and CF(0) - the membrane proton channel. CF(1) has five subunits: alpha(3), beta(3), gamma(1), delta(1), epsilon(1). CF(0) has three main subunits: a, b and c.

Its subcellular location is the cell inner membrane. Functionally, produces ATP from ADP in the presence of a proton gradient across the membrane. The protein is ATP synthase epsilon chain of Legionella pneumophila (strain Lens).